Consider the following 446-residue polypeptide: Iroquois-class homeodomain protein IRX-6 (446 aa).

The segment at residues 146 to 208 (GAGRRKNATR…NARRRLKKEN (63 aa)) is a DNA-binding region (homeobox). Disordered stretches follow at residues 208-273 (NKMT…EDEE) and 362-394 (AVEG…RLSV). Over residues 217–226 (KGGEERKAEG) the composition is skewed to basic and acidic residues. Residues 256-273 (LEDLEEEEEEEEEAEDEE) show a composition bias toward acidic residues.

This sequence belongs to the TALE/IRO homeobox family.

Its subcellular location is the nucleus. Transcription factor. Binds to the iroquois binding site (IBS) motif of target genes to regulate gene expression; functions as a transcriptional activator or repressor. Modulates expression of RCVRN, VSX1, BHLHE22/BHLHB5 and TACR3/Nk3r. Required downstream of retinal bipolar cell specification for the terminal differentiation of type 2, type 3a and possibly type 6 bipolar cells. This Homo sapiens (Human) protein is Iroquois-class homeodomain protein IRX-6 (IRX6).